A 335-amino-acid polypeptide reads, in one-letter code: Biotin synthase (335 aa).

The Radical SAM core domain maps to 46–274 (YDIQLASLFS…ESKIRLSAGR (229 aa)). Residues C61, C65, and C68 each contribute to the [4Fe-4S] cluster site. C105, C137, C197, and R269 together coordinate [2Fe-2S] cluster.

The protein belongs to the radical SAM superfamily. Biotin synthase family. As to quaternary structure, homodimer. It depends on [4Fe-4S] cluster as a cofactor. [2Fe-2S] cluster is required as a cofactor.

It catalyses the reaction (4R,5S)-dethiobiotin + (sulfur carrier)-SH + 2 reduced [2Fe-2S]-[ferredoxin] + 2 S-adenosyl-L-methionine = (sulfur carrier)-H + biotin + 2 5'-deoxyadenosine + 2 L-methionine + 2 oxidized [2Fe-2S]-[ferredoxin]. It participates in cofactor biosynthesis; biotin biosynthesis; biotin from 7,8-diaminononanoate: step 2/2. Functionally, catalyzes the conversion of dethiobiotin (DTB) to biotin by the insertion of a sulfur atom into dethiobiotin via a radical-based mechanism. The sequence is that of Biotin synthase from Prochlorococcus marinus (strain MIT 9301).